Consider the following 1446-residue polypeptide: Major viral transcription factor ICP4 homolog (1446 aa).

Disordered regions lie at residues 25–59, 73–493, 801–987, and 1385–1446; these read AEEEGIASGPDGGSQGSRRRGSSGEDLLFGPGGLF, AAAG…PPAD, PGPA…HTPR, and THRP…LLLR. A compositionally biased stretch (low complexity) spans 73–94; it reads AAAGATRPPRPPSAQQQQQPRR. Residues 101–112 are compositionally biased toward acidic residues; sequence VLDDEDEEEDEP. Low complexity-rich tracts occupy residues 166–189 and 216–241; these read RSSPSAASPASSSGSPGPSAAPRR and PAAVAAAPARRGPASPASPAAGPVSA. Residues 262 to 277 show a composition bias toward basic and acidic residues; the sequence is REPLLDEPAAARRLDP. 2 stretches are compositionally biased toward low complexity: residues 284–306 and 345–397; these read SPVSSNPNSNSNSTTTVAVETVA and GFSS…SSSS. Over residues 415–426 the composition is skewed to pro residues; it reads GPPPSPPAPAAA. Low complexity predominate over residues 427-442; it reads PRPSASSASSSAAASP. Over residues 803 to 815 the composition is skewed to pro residues; the sequence is PAEPAPGLPPLWP. Residues 827–877 show a composition bias toward low complexity; the sequence is PAAAGAPSGLPGSGPSSPASTKSSSSTKSSSSTKSGLSGSSGYASSPAAGP. The span at 883 to 892 shows a compositional bias: basic residues; it reads RRKKKRRAPG. Over residues 933–952 the composition is skewed to low complexity; the sequence is LGLGPAPDPAPALLSSSSSS.

This sequence belongs to the herpesviridae ICP4 family. A long stretch of serine residues may be a major site of phosphorylation.

Its subcellular location is the host nucleus. This IE protein is a multifunctional protein capable of migrating to the nucleus, binding to DNA, trans-activating other viral genes, and autoregulating its own synthesis. The sequence is that of Major viral transcription factor ICP4 homolog (IE) from Suid herpesvirus 1 (strain Kaplan) (SuHV-1).